The chain runs to 156 residues: Deoxyuridine 5'-triphosphate nucleotidohydrolase (156 aa).

Substrate is bound by residues 76 to 78 (RSG), asparagine 89, 93 to 95 (TVD), and lysine 103.

Belongs to the dUTPase family. The cofactor is Mg(2+).

The enzyme catalyses dUTP + H2O = dUMP + diphosphate + H(+). The protein operates within pyrimidine metabolism; dUMP biosynthesis; dUMP from dCTP (dUTP route): step 2/2. Its function is as follows. This enzyme is involved in nucleotide metabolism: it produces dUMP, the immediate precursor of thymidine nucleotides and it decreases the intracellular concentration of dUTP so that uracil cannot be incorporated into DNA. This chain is Deoxyuridine 5'-triphosphate nucleotidohydrolase, found in Rhizobium rhizogenes (strain K84 / ATCC BAA-868) (Agrobacterium radiobacter).